Reading from the N-terminus, the 374-residue chain is Palmitoyltransferase PFA5 (374 aa).

Residues 1–13 (MALSWNIRIRRRS) lie on the Cytoplasmic side of the membrane. A helical transmembrane segment spans residues 14–34 (WFRFILPIIVLGLLCYGTWAY). Residues 35–55 (CHKLCYEQVDKRLRQKSVSVG) are Lumenal-facing. The chain crosses the membrane as a helical span at residues 56–76 (LICAVCFLDVVVIFIWLQIVI). The Cytoplasmic segment spans residues 77 to 173 (LVGPGTQPHV…TVIGRDNYRL (97 aa)). A DHHC domain is found at 129–179 (IWCSECQSLKMERTHHSSELGHCIPRFDHYCMWIGTVIGRDNYRLFVQFAA). Residues 174–194 (FVQFAAYFSTLLLIMWVSICV) form a helical membrane-spanning segment. Residues 195 to 217 (YIRIITQHNHNYSPNLNANIIST) lie on the Lumenal side of the membrane. The chain crosses the membrane as a helical span at residues 218–238 (LVFAILGWLLTASLLASSIFY). Residues 239-374 (MSQNKTSLEA…ASGDDSDPAY (136 aa)) are Cytoplasmic-facing.

Belongs to the DHHC palmitoyltransferase family. PFA5 subfamily. In terms of processing, autopalmitoylated.

The protein localises to the membrane. The enzyme catalyses L-cysteinyl-[protein] + hexadecanoyl-CoA = S-hexadecanoyl-L-cysteinyl-[protein] + CoA. This Saccharomyces cerevisiae (strain ATCC 204508 / S288c) (Baker's yeast) protein is Palmitoyltransferase PFA5 (PFA5).